The sequence spans 352 residues: Ion-translocating oxidoreductase complex subunit D (352 aa).

Transmembrane regions (helical) follow at residues 20–40 (IMLL…WFFG), 42–62 (GTLV…ALVL), 78–109 (ALLT…VIIA), 123–143 (PAMI…TSWL), and 148–168 (IAVN…GHTA). Position 187 is an FMN phosphoryl threonine (Thr-187). 5 helical membrane-spanning segments follow: residues 214-234 (ILAG…GVWL), 242-262 (WHIP…GWLF), 267-287 (LAAP…FFIL), 301-321 (LIFG…GGYP), and 322-342 (DGVA…DYYT).

This sequence belongs to the NqrB/RnfD family. As to quaternary structure, the complex is composed of six subunits: RsxA, RsxB, RsxC, RsxD, RsxE and RsxG. It depends on FMN as a cofactor.

The protein localises to the cell inner membrane. In terms of biological role, part of a membrane-bound complex that couples electron transfer with translocation of ions across the membrane. Required to maintain the reduced state of SoxR. This Escherichia coli O157:H7 protein is Ion-translocating oxidoreductase complex subunit D.